We begin with the raw amino-acid sequence, 218 residues long: Capsid protein (218 aa).

An N-acetylmethionine; by host modification is found at methionine 1. Residues 1–30 (MDKSESTSAGRNRRRRPRRGSRSAPSSSDA) form a disordered region. A compositionally biased stretch (basic residues) spans 11-21 (RNRRRRPRRGS).

Belongs to the cucumovirus capsid protein family.

Its subcellular location is the virion. Functionally, capsid protein. Probably binds RNA and plays a role in packaging. This chain is Capsid protein, found in Cucumis sativus (Cucumber).